Here is a 299-residue protein sequence, read N- to C-terminus: Tyrosine recombinase XerC (299 aa).

Positions 1-81 (MDEAIRRFIE…SWRQFYHWLQ (81 aa)) constitute a Core-binding (CB) domain. The Tyr recombinase domain occupies 102-281 (LLPKALPVDG…DFQHLAKVYD (180 aa)). Catalysis depends on residues R142, K166, H233, R236, and H259. Residue Y268 is the O-(3'-phospho-DNA)-tyrosine intermediate of the active site.

The protein belongs to the 'phage' integrase family. XerC subfamily. As to quaternary structure, forms a cyclic heterotetrameric complex composed of two molecules of XerC and two molecules of XerD.

The protein resides in the cytoplasm. Site-specific tyrosine recombinase, which acts by catalyzing the cutting and rejoining of the recombining DNA molecules. The XerC-XerD complex is essential to convert dimers of the bacterial chromosome into monomers to permit their segregation at cell division. It also contributes to the segregational stability of plasmids. This Chromobacterium violaceum (strain ATCC 12472 / DSM 30191 / JCM 1249 / CCUG 213 / NBRC 12614 / NCIMB 9131 / NCTC 9757 / MK) protein is Tyrosine recombinase XerC.